Consider the following 447-residue polypeptide: Tubulin beta chain (447 aa).

Gln-11, Glu-69, Ser-138, Gly-142, Thr-143, Gly-144, Asn-204, and Asn-226 together coordinate GTP. Glu-69 lines the Mg(2+) pocket. Positions 424-447 (QYQEASVSEGEEEYDEEAPLEGEE) are disordered. Residues 432-447 (EGEEEYDEEAPLEGEE) show a composition bias toward acidic residues.

The protein belongs to the tubulin family. As to quaternary structure, dimer of alpha and beta chains. A typical microtubule is a hollow water-filled tube with an outer diameter of 25 nm and an inner diameter of 15 nM. Alpha-beta heterodimers associate head-to-tail to form protofilaments running lengthwise along the microtubule wall with the beta-tubulin subunit facing the microtubule plus end conferring a structural polarity. Microtubules usually have 13 protofilaments but different protofilament numbers can be found in some organisms and specialized cells. It depends on Mg(2+) as a cofactor.

It is found in the cytoplasm. It localises to the cytoskeleton. Tubulin is the major constituent of microtubules, a cylinder consisting of laterally associated linear protofilaments composed of alpha- and beta-tubulin heterodimers. Microtubules grow by the addition of GTP-tubulin dimers to the microtubule end, where a stabilizing cap forms. Below the cap, tubulin dimers are in GDP-bound state, owing to GTPase activity of alpha-tubulin. The chain is Tubulin beta chain (TUB1) from Dothistroma septosporum (Red band needle blight fungus).